A 98-amino-acid chain; its full sequence is NADH-ubiquinone oxidoreductase chain 4L (98 aa).

The next 3 membrane-spanning stretches (helical) occupy residues Met1–Met21, Ala29–Leu49, and Ile61–Val81.

It belongs to the complex I subunit 4L family. As to quaternary structure, core subunit of respiratory chain NADH dehydrogenase (Complex I) which is composed of 45 different subunits.

The protein localises to the mitochondrion inner membrane. The enzyme catalyses a ubiquinone + NADH + 5 H(+)(in) = a ubiquinol + NAD(+) + 4 H(+)(out). In terms of biological role, core subunit of the mitochondrial membrane respiratory chain NADH dehydrogenase (Complex I) which catalyzes electron transfer from NADH through the respiratory chain, using ubiquinone as an electron acceptor. Part of the enzyme membrane arm which is embedded in the lipid bilayer and involved in proton translocation. This Phocoena phocoena (Harbor porpoise) protein is NADH-ubiquinone oxidoreductase chain 4L (MT-ND4L).